The primary structure comprises 121 residues: U15-barytoxin-Tl1b (121 aa).

An N-terminal signal peptide occupies residues 1–16 (MKLFMVLVASFAFAVA). 4 disulfide bridges follow: cysteine 54-cysteine 72, cysteine 65-cysteine 78, cysteine 69-cysteine 119, and cysteine 71-cysteine 90.

This sequence belongs to the neurotoxin 03 (Tx2) family. 03 subfamily. In terms of tissue distribution, expressed by the venom gland.

It is found in the secreted. Functionally, ion channel inhibitor. The protein is U15-barytoxin-Tl1b of Trittame loki (Brush-footed trapdoor spider).